The chain runs to 266 residues: tRNA pseudouridine synthase A (266 aa).

Catalysis depends on aspartate 55, which acts as the Nucleophile. Position 110 (tyrosine 110) interacts with substrate.

Belongs to the tRNA pseudouridine synthase TruA family.

The catalysed reaction is uridine(38/39/40) in tRNA = pseudouridine(38/39/40) in tRNA. Formation of pseudouridine at positions 38, 39 and 40 in the anticodon stem and loop of transfer RNAs. This Thermococcus sibiricus (strain DSM 12597 / MM 739) protein is tRNA pseudouridine synthase A.